Here is a 109-residue protein sequence, read N- to C-terminus: Thioredoxin 1 (109 aa).

A Thioredoxin domain is found at 2 to 109; the sequence is SDKIIHLTDD…LKEFLDANLA (108 aa). Catalysis depends on nucleophile residues C33 and C36. C33 and C36 are joined by a disulfide. K70 is modified (N6-acetyllysine).

Belongs to the thioredoxin family. As to quaternary structure, monomer.

Its function is as follows. Participates in various redox reactions through the reversible oxidation of its active center dithiol to a disulfide and catalyzes dithiol-disulfide exchange reactions. The polypeptide is Thioredoxin 1 (trxA) (Escherichia coli O157:H7).